The chain runs to 100 residues: NAD(P)H-quinone oxidoreductase subunit 4L, chloroplastic (100 aa).

3 helical membrane passes run Met-1–Ile-21, Ala-29–Asn-49, and Ile-60–Val-80.

It belongs to the complex I subunit 4L family. As to quaternary structure, NDH is composed of at least 16 different subunits, 5 of which are encoded in the nucleus.

Its subcellular location is the plastid. The protein resides in the chloroplast thylakoid membrane. It carries out the reaction a plastoquinone + NADH + (n+1) H(+)(in) = a plastoquinol + NAD(+) + n H(+)(out). The catalysed reaction is a plastoquinone + NADPH + (n+1) H(+)(in) = a plastoquinol + NADP(+) + n H(+)(out). Functionally, NDH shuttles electrons from NAD(P)H:plastoquinone, via FMN and iron-sulfur (Fe-S) centers, to quinones in the photosynthetic chain and possibly in a chloroplast respiratory chain. The immediate electron acceptor for the enzyme in this species is believed to be plastoquinone. Couples the redox reaction to proton translocation, and thus conserves the redox energy in a proton gradient. The protein is NAD(P)H-quinone oxidoreductase subunit 4L, chloroplastic of Physcomitrium patens (Spreading-leaved earth moss).